Here is a 144-residue protein sequence, read N- to C-terminus: Cell division protein SepF (144 aa).

The tract at residues 16–42 (DEMNEAPYTEAEQQEEEVPQAQKNERR) is disordered.

It belongs to the SepF family. In terms of assembly, homodimer. Interacts with FtsZ.

The protein localises to the cytoplasm. Cell division protein that is part of the divisome complex and is recruited early to the Z-ring. Probably stimulates Z-ring formation, perhaps through the cross-linking of FtsZ protofilaments. Its function overlaps with FtsA. In Lactobacillus gasseri (strain ATCC 33323 / DSM 20243 / BCRC 14619 / CIP 102991 / JCM 1131 / KCTC 3163 / NCIMB 11718 / NCTC 13722 / AM63), this protein is Cell division protein SepF.